The chain runs to 106 residues: Large ribosomal subunit protein eL42 (106 aa).

A disordered region spans residues 34-53 (YAQGKRRYDRKQSGYGGQTK).

Belongs to the eukaryotic ribosomal protein eL42 family. Component of the large ribosomal subunit.

It localises to the cytoplasm. Component of the large ribosomal subunit. The ribosome is a large ribonucleoprotein complex responsible for the synthesis of proteins in the cell. The sequence is that of Large ribosomal subunit protein eL42 (Rpl36a) from Canis lupus familiaris (Dog).